The chain runs to 21 residues: Dahlein-5.6 (21 aa).

As to expression, expressed by the skin dorsal glands.

The protein localises to the secreted. In terms of biological role, has no antimicrobial activity. Strongly inhibits the formation of NO by neuronal nitric oxide synthase at micromolar concentrations. This is Dahlein-5.6 from Ranoidea dahlii (Dahl's aquatic frog).